The following is a 598-amino-acid chain: uncharacterized protein (598 aa).

Residues 1-19 show a composition bias toward low complexity; the sequence is MSVPLRFSTPSSSPSASDN. Disordered regions lie at residues 1–54, 139–176, and 194–279; these read MSVP…MRPK, QKNQ…PNWK, and EAQL…ITMP. Topologically, residues 1 to 313 are cytoplasmic; sequence MSVPLRFSTP…CKIRHFFREG (313 aa). Over residues 30–48 the composition is skewed to polar residues; sequence ELDTFNTTDVPRRVNTTKA. Low complexity predominate over residues 147 to 165; sequence RANSRVNSRANSRANSSVS. 2 stretches are compositionally biased toward polar residues: residues 218–242 and 255–276; these read FSLQ…SSAI and PRNN…SQDI. The chain crosses the membrane as a helical span at residues 314 to 334; the sequence is FAEFLGTLVLVVFGVGSNLQA. Residues 335-346 lie on the Extracellular side of the membrane; sequence TVTNGAGGSFES. The helical transmembrane segment at 347–367 threads the bilayer; it reads LSFAWGFGCMLGVYIAGGISG. Topologically, residues 368–388 are cytoplasmic; sequence GHVNPAVTISLAIFRKFPWYK. The NPA 1 signature appears at 371–373; sequence NPA. A helical membrane pass occupies residues 389 to 409; the sequence is VPIYIFFQIWGAFFGGALAYG. Topologically, residues 410 to 444 are extracellular; that stretch reads YHWSSITEFEGGKDIRTPATGGCLYTNPKPYVTWR. Residues 445–465 traverse the membrane as a helical segment; sequence NAFFDEFIGTAVLVGCLFAIL. Residues 466 to 473 are Cytoplasmic-facing; it reads DDTNSPPT. The chain crosses the membrane as a helical span at residues 474-494; that stretch reads QGMTAFIVGLLIAAIGMALGY. Topologically, residues 495 to 532 are extracellular; sequence QTSFTLNPARDLGPRMFAWWIGYGPHSFHLYHWWWTWG. The NPA 2 signature appears at 501–503; that stretch reads NPA. Residues 533–553 form a helical membrane-spanning segment; the sequence is AWGGTIGGGIAGGLIYDLVIF. The Cytoplasmic segment spans residues 554 to 598; the sequence is TGPESPLNYPDNGFIDKKVHQITAKFEKEEEVENLEKTDSPIENN.

It belongs to the MIP/aquaporin (TC 1.A.8) family.

Its subcellular location is the membrane. This is an uncharacterized protein from Schizosaccharomyces pombe (strain 972 / ATCC 24843) (Fission yeast).